The following is a 66-amino-acid chain: Large ribosomal subunit protein uL29 (66 aa).

Belongs to the universal ribosomal protein uL29 family.

The chain is Large ribosomal subunit protein uL29 from Rhizobium rhizogenes (strain K84 / ATCC BAA-868) (Agrobacterium radiobacter).